The primary structure comprises 995 residues: Protein translocase subunit SecA (995 aa).

Residues Gln-86, Gly-104 to Thr-108, and Asp-535 contribute to the ATP site. Positions Ala-883–Leu-911 are disordered. Cys-912, Cys-914, Cys-923, and His-924 together coordinate Zn(2+). Residues Pro-939 to Arg-995 form a disordered region. The span at Ala-957–Ile-969 shows a compositional bias: low complexity.

It belongs to the SecA family. Monomer and homodimer. Part of the essential Sec protein translocation apparatus which comprises SecA, SecYEG and auxiliary proteins SecDF. Other proteins may also be involved. Zn(2+) is required as a cofactor.

The protein resides in the cell membrane. The protein localises to the cytoplasm. It carries out the reaction ATP + H2O + cellular proteinSide 1 = ADP + phosphate + cellular proteinSide 2.. Its function is as follows. Part of the Sec protein translocase complex. Interacts with the SecYEG preprotein conducting channel. Has a central role in coupling the hydrolysis of ATP to the transfer of proteins into and across the cell membrane, serving as an ATP-driven molecular motor driving the stepwise translocation of polypeptide chains across the membrane. The sequence is that of Protein translocase subunit SecA from Chloroflexus aurantiacus (strain ATCC 29366 / DSM 635 / J-10-fl).